The primary structure comprises 91 residues: Small ribosomal subunit protein uS15 (91 aa).

Belongs to the universal ribosomal protein uS15 family. As to quaternary structure, part of the 30S ribosomal subunit. Forms a bridge to the 50S subunit in the 70S ribosome, contacting the 23S rRNA.

One of the primary rRNA binding proteins, it binds directly to 16S rRNA where it helps nucleate assembly of the platform of the 30S subunit by binding and bridging several RNA helices of the 16S rRNA. Its function is as follows. Forms an intersubunit bridge (bridge B4) with the 23S rRNA of the 50S subunit in the ribosome. The sequence is that of Small ribosomal subunit protein uS15 from Cytophaga hutchinsonii (strain ATCC 33406 / DSM 1761 / CIP 103989 / NBRC 15051 / NCIMB 9469 / D465).